The primary structure comprises 283 residues: Pantothenate synthetase (283 aa).

Residue 30–37 (MGNLHLGH) participates in ATP binding. The Proton donor role is filled by histidine 37. (R)-pantoate is bound at residue glutamine 61. Residue glutamine 61 participates in beta-alanine binding. 149 to 152 (GQKD) is an ATP binding site. Residue glutamine 155 coordinates (R)-pantoate. Residues isoleucine 178 and 186–189 (MSSR) each bind ATP.

This sequence belongs to the pantothenate synthetase family. Homodimer.

The protein localises to the cytoplasm. It carries out the reaction (R)-pantoate + beta-alanine + ATP = (R)-pantothenate + AMP + diphosphate + H(+). It participates in cofactor biosynthesis; (R)-pantothenate biosynthesis; (R)-pantothenate from (R)-pantoate and beta-alanine: step 1/1. In terms of biological role, catalyzes the condensation of pantoate with beta-alanine in an ATP-dependent reaction via a pantoyl-adenylate intermediate. In Shewanella halifaxensis (strain HAW-EB4), this protein is Pantothenate synthetase.